We begin with the raw amino-acid sequence, 180 residues long: Adenine phosphoribosyltransferase (180 aa).

The protein belongs to the purine/pyrimidine phosphoribosyltransferase family. As to quaternary structure, homodimer.

Its subcellular location is the cytoplasm. It catalyses the reaction AMP + diphosphate = 5-phospho-alpha-D-ribose 1-diphosphate + adenine. It functions in the pathway purine metabolism; AMP biosynthesis via salvage pathway; AMP from adenine: step 1/1. Functionally, catalyzes a salvage reaction resulting in the formation of AMP, that is energically less costly than de novo synthesis. The chain is Adenine phosphoribosyltransferase from Mannheimia succiniciproducens (strain KCTC 0769BP / MBEL55E).